We begin with the raw amino-acid sequence, 575 residues long: Protein NRT1/ PTR FAMILY 5.6 (575 aa).

A run of 2 helical transmembrane segments spans residues 44-64 (AALFIIAIEFSERLSYFGLAT) and 88-108 (WSGVTTLMPLLGGFIADAYLG). Thr-112 carries the phosphothreonine modification. The next 10 membrane-spanning stretches (helical) occupy residues 113 to 133 (VLVATTIYLMGLVLLTMSWFI), 153 to 173 (VAFFIAIYLISIGTGGHKPSL), 195 to 215 (FFNWWNVSLCAGILTAVTAVA), 223 to 243 (WGVAGIILTVVMAISLIIFFI), 339 to 359 (LIINVIPIWFSTLAFGICATQ), 375 to 395 (IGGFTVPPASMFTLTALTLII), 420 to 440 (ILQRIGTGMIFSLITMIIAAL), 457 to 477 (VIWLAPQFMVIGFADAFTLVG), 493 to 513 (LGIAFYLSVIGAASFLNNLLI), and 541 to 561 (FYWFLAGVIAANICVFVIVAK).

The protein belongs to the major facilitator superfamily. Proton-dependent oligopeptide transporter (POT/PTR) (TC 2.A.17) family. As to expression, expressed in stems, shoots, leaves, flowers and siliques.

The protein resides in the membrane. This is Protein NRT1/ PTR FAMILY 5.6 (NPF5.6) from Arabidopsis thaliana (Mouse-ear cress).